The chain runs to 635 residues: 1-deoxy-D-xylulose-5-phosphate synthase (635 aa).

Residues H78 and 119–121 (GHA) contribute to the thiamine diphosphate site. A Mg(2+)-binding site is contributed by D151. Thiamine diphosphate is bound by residues 152-153 (GA), N180, and Y291. A Mg(2+)-binding site is contributed by N180. The segment at 305–325 (PAFEDRGGTPVTRGSDGRPPY) is disordered. E374 lines the thiamine diphosphate pocket.

It belongs to the transketolase family. DXPS subfamily. Homodimer. It depends on Mg(2+) as a cofactor. The cofactor is thiamine diphosphate.

It carries out the reaction D-glyceraldehyde 3-phosphate + pyruvate + H(+) = 1-deoxy-D-xylulose 5-phosphate + CO2. It participates in metabolic intermediate biosynthesis; 1-deoxy-D-xylulose 5-phosphate biosynthesis; 1-deoxy-D-xylulose 5-phosphate from D-glyceraldehyde 3-phosphate and pyruvate: step 1/1. Its function is as follows. Catalyzes the acyloin condensation reaction between C atoms 2 and 3 of pyruvate and glyceraldehyde 3-phosphate to yield 1-deoxy-D-xylulose-5-phosphate (DXP). This chain is 1-deoxy-D-xylulose-5-phosphate synthase, found in Rhodopirellula baltica (strain DSM 10527 / NCIMB 13988 / SH1).